A 477-amino-acid polypeptide reads, in one-letter code: Cobyric acid synthase (477 aa).

The GATase cobBQ-type domain maps to glycine 248 to phenylalanine 432. Residue cysteine 330 is the Nucleophile of the active site. Residue histidine 424 is part of the active site.

It belongs to the CobB/CobQ family. CobQ subfamily.

It participates in cofactor biosynthesis; adenosylcobalamin biosynthesis. Catalyzes amidations at positions B, D, E, and G on adenosylcobyrinic A,C-diamide. NH(2) groups are provided by glutamine, and one molecule of ATP is hydrogenolyzed for each amidation. The sequence is that of Cobyric acid synthase from Paracoccus denitrificans (strain Pd 1222).